The following is a 610-amino-acid chain: Elongation factor 4 (610 aa).

One can recognise a tr-type G domain in the interval 15 to 197; it reads KSIRNFSIIA…RIINDIPYPK (183 aa). Residues 27-32 and 144-147 each bind GTP; these read DHGKST and NKID.

This sequence belongs to the TRAFAC class translation factor GTPase superfamily. Classic translation factor GTPase family. LepA subfamily.

Its subcellular location is the cell membrane. It carries out the reaction GTP + H2O = GDP + phosphate + H(+). Its function is as follows. Required for accurate and efficient protein synthesis under certain stress conditions. May act as a fidelity factor of the translation reaction, by catalyzing a one-codon backward translocation of tRNAs on improperly translocated ribosomes. Back-translocation proceeds from a post-translocation (POST) complex to a pre-translocation (PRE) complex, thus giving elongation factor G a second chance to translocate the tRNAs correctly. Binds to ribosomes in a GTP-dependent manner. The sequence is that of Elongation factor 4 from Buchnera aphidicola subsp. Acyrthosiphon pisum (strain APS) (Acyrthosiphon pisum symbiotic bacterium).